Reading from the N-terminus, the 399-residue chain is Elongation factor Tu (399 aa).

In terms of domain architecture, tr-type G spans 10–207 (KPHLNIGTIG…AVDNYVPEPQ (198 aa)). The segment at 19 to 26 (GHIDHGKT) is G1. Residue 19-26 (GHIDHGKT) participates in GTP binding. Position 26 (Thr26) interacts with Mg(2+). Positions 60–64 (GITIN) are G2. The G3 stretch occupies residues 81–84 (DCPG). GTP contacts are provided by residues 81–85 (DCPGH) and 136–139 (NKVD). The segment at 136–139 (NKVD) is G4. A G5 region spans residues 174-176 (SAL).

This sequence belongs to the TRAFAC class translation factor GTPase superfamily. Classic translation factor GTPase family. EF-Tu/EF-1A subfamily. In terms of assembly, monomer.

It is found in the cytoplasm. It catalyses the reaction GTP + H2O = GDP + phosphate + H(+). Functionally, GTP hydrolase that promotes the GTP-dependent binding of aminoacyl-tRNA to the A-site of ribosomes during protein biosynthesis. In Kosmotoga olearia (strain ATCC BAA-1733 / DSM 21960 / TBF 19.5.1), this protein is Elongation factor Tu.